The following is a 686-amino-acid chain: Gamma-aminobutyric acid receptor alpha-like (686 aa).

A signal peptide spans 1–58; the sequence is MCTMPATRDASGSGDASTDLIAARSLSSHQGQRSNLRIFKLLISCCLLMLCIYPNAWP. Residues 97–393 are Extracellular-facing; that stretch reads SSWLTQSNNH…NFHLQRHMGN (297 aa). Asparagine 108 is a glycosylation site (N-linked (GlcNAc...) asparagine). Cysteine 233 and cysteine 247 are oxidised to a cystine. The N-linked (GlcNAc...) asparagine glycan is linked to asparagine 292. A run of 3 helical transmembrane segments spans residues 394–414, 424–441, and 456–476; these read FLIQ…VSFW, VSLG…GLEA, and FFVF…AVVH. Residues 477 to 650 lie on the Cytoplasmic side of the membrane; the sequence is YYTKYGSGEC…YNSVSKIDRA (174 aa). The tract at residues 570 to 641 is disordered; sequence KPPRADSDED…RRKGKRTPQY (72 aa). The span at 586–596 shows a compositional bias: polar residues; that stretch reads QLRANEAPTTS. The segment covering 597–609 has biased composition (low complexity); the sequence is AAAAAAQAAAQAA. The chain crosses the membrane as a helical span at residues 651-671; the sequence is SRIVFPLLFILINVFYWYGYL.

Belongs to the ligand-gated ion channel (TC 1.A.9) family. Gamma-aminobutyric acid receptor (TC 1.A.9.5) subfamily. As to quaternary structure, generally pentameric. There are five types of GABA(A) receptor chains: alpha, beta, gamma, delta, and rho. Interacts with Lcch3 (beta chain).

The protein resides in the postsynaptic cell membrane. Its subcellular location is the cell membrane. Functionally, GABA, an inhibitory neurotransmitter, mediates neuronal inhibition by binding to the GABA receptor and opening an integral chloride channel. May combine with the ligand-gated ion channel subunit Lcch3 to form cation-selective GABA-gated ion channels. The polypeptide is Gamma-aminobutyric acid receptor alpha-like (Grd) (Drosophila melanogaster (Fruit fly)).